The chain runs to 189 residues: Chitin synthase 1 (189 aa).

The protein belongs to the chitin synthase family.

The protein resides in the cell membrane. The enzyme catalyses [(1-&gt;4)-N-acetyl-beta-D-glucosaminyl](n) + UDP-N-acetyl-alpha-D-glucosamine = [(1-&gt;4)-N-acetyl-beta-D-glucosaminyl](n+1) + UDP + H(+). Its function is as follows. Polymerizes chitin, a structural polymer of the cell wall and septum, by transferring the sugar moiety of UDP-GlcNAc to the non-reducing end of the growing chitin polymer. The polypeptide is Chitin synthase 1 (CHS1) (Schizophyllum commune (Split gill fungus)).